We begin with the raw amino-acid sequence, 101 residues long: Large ribosomal subunit protein uL24 (101 aa).

This sequence belongs to the universal ribosomal protein uL24 family. As to quaternary structure, part of the 50S ribosomal subunit.

Functionally, one of two assembly initiator proteins, it binds directly to the 5'-end of the 23S rRNA, where it nucleates assembly of the 50S subunit. One of the proteins that surrounds the polypeptide exit tunnel on the outside of the subunit. The chain is Large ribosomal subunit protein uL24 from Borrelia recurrentis (strain A1).